Reading from the N-terminus, the 276-residue chain is Elongation factor Ts (276 aa).

The segment at 76 to 79 (TDFV) is involved in Mg(2+) ion dislocation from EF-Tu.

Belongs to the EF-Ts family.

It localises to the cytoplasm. Its function is as follows. Associates with the EF-Tu.GDP complex and induces the exchange of GDP to GTP. It remains bound to the aminoacyl-tRNA.EF-Tu.GTP complex up to the GTP hydrolysis stage on the ribosome. This is Elongation factor Ts from Mycobacterium leprae (strain Br4923).